Reading from the N-terminus, the 163-residue chain is Endoribonuclease YbeY (163 aa).

Residues His-123, His-127, and His-133 each contribute to the Zn(2+) site.

This sequence belongs to the endoribonuclease YbeY family. Requires Zn(2+) as cofactor.

The protein resides in the cytoplasm. Single strand-specific metallo-endoribonuclease involved in late-stage 70S ribosome quality control and in maturation of the 3' terminus of the 16S rRNA. This is Endoribonuclease YbeY from Helicobacter hepaticus (strain ATCC 51449 / 3B1).